Reading from the N-terminus, the 291-residue chain is BTB/POZ domain-containing protein 19 (291 aa).

The BTB domain occupies 29–98; that stretch reads SDVCFVVGQE…LYTNSVKLYR (70 aa). The 101-residue stretch at 134–234 folds into the BACK domain; sequence CEALQVAVTF…LALLAPAELS (101 aa).

The protein is BTB/POZ domain-containing protein 19 (BTBD19) of Homo sapiens (Human).